The chain runs to 475 residues: MAALTTLFKYIDENQDRYIKKLAKWVAIQSVSAWPEKRGEIRRMMEVAAADVKQLGGSVELVDIGKQKLPDGSEIPLPPILLGRLGSDPQKKTVCIYGHLDVQPAALEDGWDSEPFTLVERDGKLHGRGSTDDKGPVAGWINALEAYQKTDQEIPVNVRFCLEGMEESGSEGLDELIFAQKDTFFKDVDYVCISDNYWLGKKKPCITYGLRGICYFFIEVECSNKDLHSGVYGGSVHEAMTDLILLMGSLVDKRGNILIPGINEAVAAVTEEEHKLYDDIDFDIEEFAKDVGAQILLHSNKKDILMHRWRYPSLSLHGIEGAFSGSGAKTVIPRKVVGKFSIRLVPNMTPEVVSEQVTSYLTKKFAELRSPNEFKVYMGHGGKPWVSDFSHPHYVAGRRAMRTVFGVEPDLTREGGSIPVTLTFQEATGKNVMLLPVGSADDGAHSQNEKLNRHNYIEGTKMLAAYLYEVSQLKD.

The residue at position 2 (alanine 2) is an N-acetylalanine. At lysine 9 the chain carries N6-acetyllysine. Phosphoserine is present on serine 58. Histidine 99 contributes to the Mn(2+) binding site. Aspartate 101 is an active-site residue. Aspartate 132 provides a ligand contact to Mn(2+). Catalysis depends on glutamate 166, which acts as the Proton acceptor. Residues glutamate 166–glutamate 167, aspartate 195, and histidine 228 contribute to the substrate site. Residues glutamate 167 and aspartate 195 each coordinate Mn(2+). Serine 299 carries the phosphoserine modification. Substrate contacts are provided by threonine 330, arginine 343, serine 417, and histidine 445. Position 445 (histidine 445) interacts with Mn(2+).

Belongs to the peptidase M20A family. As to quaternary structure, homodimer. Requires Mn(2+) as cofactor.

The protein resides in the cytoplasm. The enzyme catalyses Hydrolysis of dipeptides, preferentially hydrophobic dipeptides including prolyl amino acids.. The catalysed reaction is L-threonyl-L-threonine + H2O = 2 L-threonine. It catalyses the reaction L-threonyl-L-serine + H2O = L-threonine + L-serine. It carries out the reaction L-seryl-L-threonine + H2O = L-threonine + L-serine. The enzyme catalyses L-cysteinylglycine + H2O = L-cysteine + glycine. The catalysed reaction is (S)-lactate + L-phenylalanine = N-[(S)-lactoyl]-L-phenylalanine + H2O. Its function is as follows. Catalyzes the peptide bond hydrolysis in dipeptides, displaying a non-redundant activity toward threonyl dipeptides. Mediates threonyl dipeptide catabolism in a tissue-specific way. Has high dipeptidase activity toward cysteinylglycine, an intermediate metabolite in glutathione metabolism. Metabolizes N-lactoyl-amino acids, both through hydrolysis to form lactic acid and amino acids, as well as through their formation by reverse proteolysis. Plays a role in the regulation of cell cycle arrest and apoptosis. This chain is Cytosolic non-specific dipeptidase (CNDP2), found in Pongo abelii (Sumatran orangutan).